Here is a 127-residue protein sequence, read N- to C-terminus: Gamma-synuclein (127 aa).

A run of 2 repeats spans residues 20–30 (EKTKQGVTEAA) and 31–41 (EKTKEGVMYVG). The interval 20–67 (EKTKQGVTEAAEKTKEGVMYVGTKTKENVVHSVTSVAEKTKEQANAVS) is 4 X 11 AA tandem repeats of [EGSA]-K-T-K-[EQ]-[GQ]-V-X(4). One copy of the 3; approximate repeat lies at 42–56 (TKTKENVVHSVTSVA). Residues 57–67 (EKTKEQANAVS) form repeat 4. Phosphoserine is present on residues Ser67 and Ser72. The segment at 97-127 (KEDLKPSAPQQEGEAAKEKEEVAEEAQSGGD) is disordered. The residue at position 124 (Ser124) is a Phosphoserine; by BARK1, CaMK2 and CK2.

Belongs to the synuclein family. As to quaternary structure, may be a centrosome-associated protein. Interacts with MYOC; affects its secretion and its aggregation. Phosphorylated. Phosphorylation by GRK5 appears to occur on residues distinct from the residue phosphorylated by other kinases.

The protein resides in the cytoplasm. Its subcellular location is the perinuclear region. It is found in the cytoskeleton. The protein localises to the microtubule organizing center. It localises to the centrosome. The protein resides in the spindle. Plays a role in neurofilament network integrity. May be involved in modulating axonal architecture during development and in the adult. In vitro, increases the susceptibility of neurofilament-H to calcium-dependent proteases. May also function in modulating the keratin network in skin. Activates the MAPK and Elk-1 signal transduction pathway. The polypeptide is Gamma-synuclein (SNCG) (Macaca fascicularis (Crab-eating macaque)).